The primary structure comprises 98 residues: UPF0390 protein zgc136864 (98 aa).

Positions 1–30 (MAQGKQKFKAQRPGGAKKHQNKPKGLKKGG) are enriched in basic residues. Disordered stretches follow at residues 1–38 (MAQG…PKKA) and 63–98 (TQKA…GPSK). Residues 83-98 (KSGTAGAPKPAAGPSK) show a composition bias toward low complexity.

Belongs to the UPF0390 family.

The protein is UPF0390 protein zgc136864 of Danio rerio (Zebrafish).